Consider the following 82-residue polypeptide: MGFRLPGIRKASNAVDAPKGYLAVYVGEKMKRFVIPVSYMNQPSFQDLLTQAEEEFGYDHPMGGLTIPCSEEVFQRITCCLN.

Belongs to the ARG7 family.

This chain is Auxin-induced protein X15, found in Glycine max (Soybean).